The chain runs to 360 residues: NADH-quinone oxidoreductase subunit H (360 aa).

Helical transmembrane passes span 22–42, 97–117, 130–150, 170–190, 208–228, 255–275, 292–312, and 336–356; these read ITVGLVVSVIVKIVIILIPLI, ALFYIGPIMSLAPSFAAWAVI, IGLLYILMITSLSVYGVIIAG, ISYEIAMSAALVCVVMVSGSM, VFSWNWLPLFPIFIVYLISAV, GFAFALFFLAEYIFMILIAAL, WGFIGTPSAFWMFVKMAAVLY, and VLIPIGFAYIVILGVWMISPL.

The protein belongs to the complex I subunit 1 family. In terms of assembly, NDH-1 is composed of 14 different subunits. Subunits NuoA, H, J, K, L, M, N constitute the membrane sector of the complex.

Its subcellular location is the cell inner membrane. The catalysed reaction is a quinone + NADH + 5 H(+)(in) = a quinol + NAD(+) + 4 H(+)(out). In terms of biological role, NDH-1 shuttles electrons from NADH, via FMN and iron-sulfur (Fe-S) centers, to quinones in the respiratory chain. The immediate electron acceptor for the enzyme in this species is believed to be ubiquinone. Couples the redox reaction to proton translocation (for every two electrons transferred, four hydrogen ions are translocated across the cytoplasmic membrane), and thus conserves the redox energy in a proton gradient. This subunit may bind ubiquinone. The protein is NADH-quinone oxidoreductase subunit H of Neisseria meningitidis serogroup C / serotype 2a (strain ATCC 700532 / DSM 15464 / FAM18).